Consider the following 293-residue polypeptide: Putative metal ABC transporter substrate-binding protein Hpf (293 aa).

The signal sequence occupies residues 1–22 (MRNSFKIMTALALGLFAMQANA). The interval 23–48 (KFKVVTTFTVIQDIAQNVAGNAATVE) is interaction with host components. The a divalent metal cation site is built by His58, His123, Glu189, and Asp264.

This sequence belongs to the bacterial solute-binding protein 9 family. In terms of assembly, interacts with host laminin and vitronectin. Can interact with both immobilized and soluble vitronectin.

It is found in the cell outer membrane. The protein resides in the cell surface. Its subcellular location is the periplasm. Its function is as follows. Part of an ATP-binding cassette (ABC) transport system involved in metal import. Binds a metal with high affinity and specificity and delivers it to the membrane permease for translocation into the cytoplasm. Acts as an adhesin that promotes binding of H.influenzae to host laminin and vitronectin. In addition, interaction with serum vitronectin plays an important role in bacterial serum resistance. This is Putative metal ABC transporter substrate-binding protein Hpf (hpf) from Haemophilus influenzae (strain NTHi 3655).